The following is a 222-amino-acid chain: CASP-like protein 1E1 (222 aa).

At 1–59 (MEASRVKPGFNGVGMAAGSVNGSSRRPGPGLGYGYGYYMGSGAAAGGSGRAAQAPVDGC) the chain is on the cytoplasmic side. A helical membrane pass occupies residues 60-80 (SVALRVFVVASTLVSAVVMGV). Over 81–110 (DRQTRTIQITITDALPPLEVPLTANWSYSS) the chain is Extracellular. Asparagine 105 is a glycosylation site (N-linked (GlcNAc...) asparagine). The helical transmembrane segment at 111–131 (AFVYFVVANAMVCLFSAAALA) threads the bilayer. The Cytoplasmic portion of the chain corresponds to 132–146 (ACRSRAAMVPVMVGD). A helical transmembrane segment spans residues 147-167 (LLALALLYSAVGAAAEFGILG). The Extracellular portion of the chain corresponds to 168–189 (ERGNSHVRWAKVCNVYGRFCDR). Residues 190 to 210 (AMAAVIVSLIGAFANLVLLML) form a helical membrane-spanning segment. Over 211–222 (NILTIHKSSSYY) the chain is Cytoplasmic.

It belongs to the Casparian strip membrane proteins (CASP) family. As to quaternary structure, homodimer and heterodimers.

It localises to the cell membrane. This Sorghum bicolor (Sorghum) protein is CASP-like protein 1E1.